A 175-amino-acid chain; its full sequence is Anterior gradient protein 2 homolog (175 aa).

The signal sequence occupies residues 1–20; the sequence is MEKISVSAFLLLVALSYTLA. The segment at 21-40 is required to promote cell adhesion; sequence RDTTVKPAAKKDTKDSRPKL. 2 short sequence motifs (homodimer stabilization; interchain) span residues 45 to 54 and 60 to 67; these read SRGWGDQLIW and EALYKSKT.

This sequence belongs to the AGR family. In terms of assembly, monomer and homodimer. Interacts with LYPD3 and DAG1 (alphaDAG1). Interacts with MUC2; disulfide-linked.

It localises to the secreted. The protein resides in the endoplasmic reticulum. In terms of biological role, required for MUC2 post-transcriptional synthesis and secretion. May play a role in the production of mucus by intestinal cells. Proto-oncogene that may play a role in cell migration, cell differentiation and cell growth. Promotes cell adhesion. The chain is Anterior gradient protein 2 homolog (AGR2) from Pongo abelii (Sumatran orangutan).